A 162-amino-acid chain; its full sequence is SsrA-binding protein (162 aa).

The span at 137–154 (HDKREDTKAREWDREKAR) shows a compositional bias: basic and acidic residues. Residues 137–162 (HDKREDTKAREWDREKARIMKNKHRG) form a disordered region.

The protein belongs to the SmpB family.

It localises to the cytoplasm. Functionally, required for rescue of stalled ribosomes mediated by trans-translation. Binds to transfer-messenger RNA (tmRNA), required for stable association of tmRNA with ribosomes. tmRNA and SmpB together mimic tRNA shape, replacing the anticodon stem-loop with SmpB. tmRNA is encoded by the ssrA gene; the 2 termini fold to resemble tRNA(Ala) and it encodes a 'tag peptide', a short internal open reading frame. During trans-translation Ala-aminoacylated tmRNA acts like a tRNA, entering the A-site of stalled ribosomes, displacing the stalled mRNA. The ribosome then switches to translate the ORF on the tmRNA; the nascent peptide is terminated with the 'tag peptide' encoded by the tmRNA and targeted for degradation. The ribosome is freed to recommence translation, which seems to be the essential function of trans-translation. The chain is SsrA-binding protein from Aeromonas salmonicida (strain A449).